A 41-amino-acid chain; its full sequence is Photosystem I reaction center subunit IX (41 aa).

The helical transmembrane segment at 7-27 threads the bilayer; sequence YLSTVPVVFAIWLTFTAGLII.

The protein belongs to the PsaJ family.

It localises to the plastid. It is found in the chloroplast thylakoid membrane. May help in the organization of the PsaE and PsaF subunits. In Bigelowiella natans (Pedinomonas minutissima), this protein is Photosystem I reaction center subunit IX.